The chain runs to 62 residues: Photosystem II reaction center protein Z (62 aa).

2 consecutive transmembrane segments (helical) span residues 8-28 (AVFA…VVFA) and 41-61 (FSGT…NSLI).

It belongs to the PsbZ family. As to quaternary structure, PSII is composed of 1 copy each of membrane proteins PsbA, PsbB, PsbC, PsbD, PsbE, PsbF, PsbH, PsbI, PsbJ, PsbK, PsbL, PsbM, PsbT, PsbY, PsbZ, Psb30/Ycf12, at least 3 peripheral proteins of the oxygen-evolving complex and a large number of cofactors. It forms dimeric complexes.

The protein localises to the plastid. Its subcellular location is the chloroplast thylakoid membrane. Functionally, may control the interaction of photosystem II (PSII) cores with the light-harvesting antenna, regulates electron flow through the 2 photosystem reaction centers. PSII is a light-driven water plastoquinone oxidoreductase, using light energy to abstract electrons from H(2)O, generating a proton gradient subsequently used for ATP formation. The protein is Photosystem II reaction center protein Z of Liriodendron tulipifera (Tuliptree).